The following is a 145-amino-acid chain: RNA polymerase I-specific transcription initiation factor RRN10 (145 aa).

As to quaternary structure, component of the UAF (upstream activation factor) complex which consists of UAF30, RRN5, RRN9, RRN10, and histones H3 and H4.

It localises to the nucleus. It is found in the nucleolus. Its function is as follows. Component of the UAF (upstream activation factor) complex which interacts with the upstream element of the RNA polymerase I promoter and forms a stable preinitiation complex. Together with SPT15/TBP UAF seems to stimulate basal transcription to a fully activated level. The protein is RNA polymerase I-specific transcription initiation factor RRN10 (RRN10) of Saccharomyces cerevisiae (strain ATCC 204508 / S288c) (Baker's yeast).